The following is a 179-amino-acid chain: NAD(P)H-quinone oxidoreductase subunit 6, chloroplastic (179 aa).

The next 5 membrane-spanning stretches (helical) occupy residues 8–28 (ITLF…VFFN), 30–50 (IIYS…LYLL), 58–78 (VAQV…AIML), 98–118 (SFCV…TTPW), and 150–170 (VLPF…AVII).

Belongs to the complex I subunit 6 family. As to quaternary structure, NDH is composed of at least 16 different subunits, 5 of which are encoded in the nucleus.

It is found in the plastid. The protein resides in the chloroplast thylakoid membrane. The enzyme catalyses a plastoquinone + NADH + (n+1) H(+)(in) = a plastoquinol + NAD(+) + n H(+)(out). The catalysed reaction is a plastoquinone + NADPH + (n+1) H(+)(in) = a plastoquinol + NADP(+) + n H(+)(out). NDH shuttles electrons from NAD(P)H:plastoquinone, via FMN and iron-sulfur (Fe-S) centers, to quinones in the photosynthetic chain and possibly in a chloroplast respiratory chain. The immediate electron acceptor for the enzyme in this species is believed to be plastoquinone. Couples the redox reaction to proton translocation, and thus conserves the redox energy in a proton gradient. The polypeptide is NAD(P)H-quinone oxidoreductase subunit 6, chloroplastic (ndhG) (Chaetosphaeridium globosum (Charophycean green alga)).